Consider the following 240-residue polypeptide: Probable septum site-determining protein MinC (240 aa).

The protein belongs to the MinC family. In terms of assembly, interacts with MinD and FtsZ.

Its function is as follows. Cell division inhibitor that blocks the formation of polar Z ring septums. Rapidly oscillates between the poles of the cell to destabilize FtsZ filaments that have formed before they mature into polar Z rings. Prevents FtsZ polymerization. This Chromobacterium violaceum (strain ATCC 12472 / DSM 30191 / JCM 1249 / CCUG 213 / NBRC 12614 / NCIMB 9131 / NCTC 9757 / MK) protein is Probable septum site-determining protein MinC.